We begin with the raw amino-acid sequence, 310 residues long: 4-hydroxy-3-methylbut-2-enyl diphosphate reductase (310 aa).

[4Fe-4S] cluster is bound at residue Cys12. (2E)-4-hydroxy-3-methylbut-2-enyl diphosphate contacts are provided by His41 and His74. 2 residues coordinate dimethylallyl diphosphate: His41 and His74. Positions 41 and 74 each coordinate isopentenyl diphosphate. Cys96 contacts [4Fe-4S] cluster. Residue His124 participates in (2E)-4-hydroxy-3-methylbut-2-enyl diphosphate binding. Dimethylallyl diphosphate is bound at residue His124. Position 124 (His124) interacts with isopentenyl diphosphate. Glu126 functions as the Proton donor in the catalytic mechanism. Thr167 contacts (2E)-4-hydroxy-3-methylbut-2-enyl diphosphate. Cys197 contributes to the [4Fe-4S] cluster binding site. Positions 225, 226, 227, and 269 each coordinate (2E)-4-hydroxy-3-methylbut-2-enyl diphosphate. 4 residues coordinate dimethylallyl diphosphate: Ser225, Ser226, Asn227, and Ser269. Residues Ser225, Ser226, Asn227, and Ser269 each contribute to the isopentenyl diphosphate site.

This sequence belongs to the IspH family. [4Fe-4S] cluster is required as a cofactor.

It catalyses the reaction isopentenyl diphosphate + 2 oxidized [2Fe-2S]-[ferredoxin] + H2O = (2E)-4-hydroxy-3-methylbut-2-enyl diphosphate + 2 reduced [2Fe-2S]-[ferredoxin] + 2 H(+). The catalysed reaction is dimethylallyl diphosphate + 2 oxidized [2Fe-2S]-[ferredoxin] + H2O = (2E)-4-hydroxy-3-methylbut-2-enyl diphosphate + 2 reduced [2Fe-2S]-[ferredoxin] + 2 H(+). Its pathway is isoprenoid biosynthesis; dimethylallyl diphosphate biosynthesis; dimethylallyl diphosphate from (2E)-4-hydroxy-3-methylbutenyl diphosphate: step 1/1. It participates in isoprenoid biosynthesis; isopentenyl diphosphate biosynthesis via DXP pathway; isopentenyl diphosphate from 1-deoxy-D-xylulose 5-phosphate: step 6/6. In terms of biological role, catalyzes the conversion of 1-hydroxy-2-methyl-2-(E)-butenyl 4-diphosphate (HMBPP) into a mixture of isopentenyl diphosphate (IPP) and dimethylallyl diphosphate (DMAPP). Acts in the terminal step of the DOXP/MEP pathway for isoprenoid precursor biosynthesis. This Tolumonas auensis (strain DSM 9187 / NBRC 110442 / TA 4) protein is 4-hydroxy-3-methylbut-2-enyl diphosphate reductase.